A 95-amino-acid chain; its full sequence is Aspartyl/glutamyl-tRNA(Asn/Gln) amidotransferase subunit C (95 aa).

This sequence belongs to the GatC family. In terms of assembly, heterotrimer of A, B and C subunits.

It carries out the reaction L-glutamyl-tRNA(Gln) + L-glutamine + ATP + H2O = L-glutaminyl-tRNA(Gln) + L-glutamate + ADP + phosphate + H(+). The enzyme catalyses L-aspartyl-tRNA(Asn) + L-glutamine + ATP + H2O = L-asparaginyl-tRNA(Asn) + L-glutamate + ADP + phosphate + 2 H(+). Its function is as follows. Allows the formation of correctly charged Asn-tRNA(Asn) or Gln-tRNA(Gln) through the transamidation of misacylated Asp-tRNA(Asn) or Glu-tRNA(Gln) in organisms which lack either or both of asparaginyl-tRNA or glutaminyl-tRNA synthetases. The reaction takes place in the presence of glutamine and ATP through an activated phospho-Asp-tRNA(Asn) or phospho-Glu-tRNA(Gln). The sequence is that of Aspartyl/glutamyl-tRNA(Asn/Gln) amidotransferase subunit C from Rhizobium leguminosarum bv. trifolii (strain WSM2304).